Reading from the N-terminus, the 123-residue chain is Small ribosomal subunit protein uS12 (123 aa).

Position 89 is a 3-methylthioaspartic acid (Asp-89).

This sequence belongs to the universal ribosomal protein uS12 family. In terms of assembly, part of the 30S ribosomal subunit. Contacts proteins S8 and S17. May interact with IF1 in the 30S initiation complex.

In terms of biological role, with S4 and S5 plays an important role in translational accuracy. Its function is as follows. Interacts with and stabilizes bases of the 16S rRNA that are involved in tRNA selection in the A site and with the mRNA backbone. Located at the interface of the 30S and 50S subunits, it traverses the body of the 30S subunit contacting proteins on the other side and probably holding the rRNA structure together. The combined cluster of proteins S8, S12 and S17 appears to hold together the shoulder and platform of the 30S subunit. The polypeptide is Small ribosomal subunit protein uS12 (Bartonella tribocorum (strain CIP 105476 / IBS 506)).